The primary structure comprises 50 residues: Ampulexin 1 (50 aa).

Positions 1-26 (MKAIMVLFYVMMLTIIASVSMVNGSP) are cleaved as a signal peptide.

In terms of assembly, monomer. In terms of tissue distribution, expressed in venom sac and, to a lesser extent, in venom gland. Not expressed in brain.

It is found in the secreted. Functionally, amphipathic peptide which probably adopts an alpha-helical structure. When injected in subesophageal ganglia of cockroach P.americana, a natural host for larvae of A.compressa, dampens the escape response for about 1 hour which may contribute to early stages of hypokinesia. Has no antimicrobial activity against E.coli DH5alpha or B.thuringiensis. Is not cytotoxic in vitro. This is Ampulexin 1 from Ampulex compressa (Emerald cockroach wasp).